Consider the following 857-residue polypeptide: Glucans biosynthesis glucosyltransferase H (857 aa).

The next 6 membrane-spanning stretches (helical) occupy residues 142–162 (ILLT…KGIL), 196–216 (ILIL…TALM), 515–535 (VFLT…FLVL), 572–592 (LFST…ILIW), 606–626 (TLSM…RMIF), and 682–702 (FLWW…VSVI).

It belongs to the glycosyltransferase 2 family. OpgH subfamily.

The protein localises to the cell inner membrane. The protein operates within glycan metabolism; osmoregulated periplasmic glucan (OPG) biosynthesis. Involved in the biosynthesis of osmoregulated periplasmic glucans (OPGs). The polypeptide is Glucans biosynthesis glucosyltransferase H (Pseudomonas putida (strain W619)).